Reading from the N-terminus, the 175-residue chain is ADP-ribosylation factor 6 (175 aa).

The N-myristoyl glycine moiety is linked to residue Gly-2. GTP contacts are provided by residues 20–27 (GLDAAGKT), 63–67 (DVGGQ), and 122–125 (NKQD).

It belongs to the small GTPase superfamily. Arf family. In terms of tissue distribution, expressed in the head (at protein level).

It localises to the golgi apparatus. Its activity is regulated as follows. Activation is generally mediated by a guanine exchange factor (GEF), while inactivation through hydrolysis of bound GTP is catalyzed by a GTPase activating protein (GAP). May be activated by Efa6. In terms of biological role, GTP-binding protein involved in protein trafficking; may modulate vesicle budding and uncoating within the Golgi apparatus. Promotes cell movement and remodeling of the actin cytoskeleton during compound eye morphogenesis. Required for normal ethanol-induced tolerance and preference. Probably after Efa6-mediated activation, counteracts ethanol-induced sedation. This Drosophila melanogaster (Fruit fly) protein is ADP-ribosylation factor 6.